Consider the following 843-residue polypeptide: Transmembrane protease serine 7 (843 aa).

At 1–76 (MDKENSDVSA…KVPFWNVQNK (76 aa)) the chain is on the cytoplasmic side. The interval 27–67 (AQKKLPVRRPPLPGRRLPLPGRRPPQRPIGKAKPKKQSKKK) is disordered. Over residues 56–67 (GKAKPKKQSKKK) the composition is skewed to basic residues. Residues 77 to 97 (IILFTVFLFILAVIAWTLLWL) form a helical; Signal-anchor for type II membrane protein membrane-spanning segment. Over 98–843 (YISKTESKDA…WIHKYVPSLL (746 aa)) the chain is Extracellular. In terms of domain architecture, SEA spans 106–234 (DAFYFAGMFR…DSVVLNAGLR (129 aa)). Cystine bridges form between Cys-247-Cys-273, Cys-299-Cys-322, Cys-365-Cys-396, Cys-484-Cys-496, Cys-491-Cys-509, Cys-503-Cys-518, Cys-525-Cys-544, Cys-538-Cys-553, Cys-559-Cys-571, Cys-566-Cys-585, Cys-579-Cys-594, and Cys-631-Cys-647. 2 consecutive CUB domains span residues 247–360 (CSQY…FEVI) and 365–481 (CENT…YNIS). 3 LDL-receptor class A domains span residues 483 to 519 (PCPV…LFCV), 517 to 554 (FCVS…QNCT), and 558 to 595 (PCNN…EGCT). In terms of domain architecture, Peptidase S1 spans 606–840 (IIGGTDTLEG…FVPWIHKYVP (235 aa)). Residues His-646 and Asp-694 each act as charge relay system in the active site. Disulfide bonds link Cys-730–Cys-796 and Cys-762–Cys-775. The active-site Charge relay system is the Ser-790.

Belongs to the peptidase S1 family. In terms of assembly, forms a heterodimer with SERPINA5. In terms of processing, N-glycosylated. As to expression, expressed in brain, ovary, testis, salivary gland, trachea and lung.

The protein resides in the cell membrane. Functionally, serine protease which preferentially hydrolyzes peptides with Arg at the P1 position. This chain is Transmembrane protease serine 7 (TMPRSS7), found in Homo sapiens (Human).